The sequence spans 72 residues: Translation initiation factor IF-1 (72 aa).

The S1-like domain occupies 1-72; it reads MAKEDCIEME…TKGRIKFRSK (72 aa).

Belongs to the IF-1 family. As to quaternary structure, component of the 30S ribosomal translation pre-initiation complex which assembles on the 30S ribosome in the order IF-2 and IF-3, IF-1 and N-formylmethionyl-tRNA(fMet); mRNA recruitment can occur at any time during PIC assembly.

The protein localises to the cytoplasm. Functionally, one of the essential components for the initiation of protein synthesis. Stabilizes the binding of IF-2 and IF-3 on the 30S subunit to which N-formylmethionyl-tRNA(fMet) subsequently binds. Helps modulate mRNA selection, yielding the 30S pre-initiation complex (PIC). Upon addition of the 50S ribosomal subunit IF-1, IF-2 and IF-3 are released leaving the mature 70S translation initiation complex. The chain is Translation initiation factor IF-1 from Francisella tularensis subsp. tularensis (strain FSC 198).